Consider the following 328-residue polypeptide: Serine protease 27 (328 aa).

The first 22 residues, 1–22 (MRQPHIAALLLLPLLLRSGTEG), serve as a signal peptide directing secretion. A propeptide spans 23–37 (ARTLRACGHPKMFNR) (activation peptide). The Peptidase S1 domain occupies 38–280 (MVGGENALEG…HHKWIHQIIP (243 aa)). The cysteines at positions 63 and 79 are disulfide-linked. Histidine 78 (charge relay system) is an active-site residue. N-linked (GlcNAc...) asparagine glycosylation occurs at asparagine 82. Aspartate 127 serves as the catalytic Charge relay system. Intrachain disulfides connect cysteine 161-cysteine 238, cysteine 194-cysteine 217, and cysteine 228-cysteine 256. Serine 232 serves as the catalytic Charge relay system.

It belongs to the peptidase S1 family.

It localises to the secreted. The protein is Serine protease 27 (Prss27) of Mus musculus (Mouse).